Consider the following 748-residue polypeptide: E3 ubiquitin-protein ligase SMURF2 (748 aa).

A C2 domain is found at M1–K119. K119 participates in a covalent cross-link: Glycyl lysine isopeptide (Lys-Gly) (interchain with G-Cter in ubiquitin). 3 consecutive WW domains span residues N157–R190, P251–V284, and G297–L330. One can recognise an HECT domain in the interval R414–E748. Catalysis depends on C716, which acts as the Glycyl thioester intermediate.

In terms of assembly, interacts (via WW domains) with SMAD1. Interacts (via WW domains) with SMAD2 (via PY-motif). Interacts (via WW domains) with SMAD3 (via PY-motif). Interacts with SMAD6. Interacts with SMAD7 (via PY-motif) and TGFBR1; SMAD7 recruits SMURF2 to the TGF-beta receptor and regulates its degradation. Does not interact with SMAD4; SMAD4 lacks a PY-motif. Interacts with AIMP1. Interacts with SNON. Interacts with STAMBP and RNF11. May interact with NDFIP1 and NDFIP2; this interaction induces the E3 ubiquitin-protein ligase activity. Interacts with TTC3. As to quaternary structure, (Microbial infection) Interacts (via WW domains) with EBOV and MARV VP40 (via PPXY motif); the interaction facilitates VP40 virus-like particle budding. Post-translationally, auto-ubiquitinated and ubiquitinated in the presence of RNF11 and UBE2D1. Ubiquitinated by the SCF(FBXL15) complex and TTC3, leading to its degradation by the proteasome. 'Lys-48'-linked polyubiquitination mediated by TRAF4 at Lys-119 leads to SMURF2 proteasomal degradation. As to expression, widely expressed.

It localises to the nucleus. The protein localises to the cytoplasm. The protein resides in the cell membrane. It is found in the membrane raft. It catalyses the reaction S-ubiquitinyl-[E2 ubiquitin-conjugating enzyme]-L-cysteine + [acceptor protein]-L-lysine = [E2 ubiquitin-conjugating enzyme]-L-cysteine + N(6)-ubiquitinyl-[acceptor protein]-L-lysine.. The protein operates within protein modification; protein ubiquitination. Its activity is regulated as follows. Activated by NDFIP1- and NDFIP2-binding. Functionally, E3 ubiquitin-protein ligase which accepts ubiquitin from an E2 ubiquitin-conjugating enzyme in the form of a thioester and then directly transfers the ubiquitin to targeted substrates. Interacts with SMAD7 to trigger SMAD7-mediated transforming growth factor beta/TGF-beta receptor ubiquitin-dependent degradation, thereby down-regulating TGF-beta signaling. In addition, interaction with SMAD7 activates autocatalytic degradation, which is prevented by interaction with AIMP1. Also forms a stable complex with TGF-beta receptor-mediated phosphorylated SMAD1, SMAD2 and SMAD3, and targets SMAD1 and SMAD2 for ubiquitination and proteasome-mediated degradation. SMAD2 may recruit substrates, such as SNON, for ubiquitin-dependent degradation. Negatively regulates TGFB1-induced epithelial-mesenchymal transition and myofibroblast differentiation. In terms of biological role, (Microbial infection) In case of filoviruses Ebola/EBOV and Marburg/MARV infection, the complex formed by viral matrix protein VP40 and SMURF2 facilitates virus budding. This Homo sapiens (Human) protein is E3 ubiquitin-protein ligase SMURF2.